Here is a 355-residue protein sequence, read N- to C-terminus: Guanine nucleotide-binding protein G(i) subunit alpha (355 aa).

A lipid anchor (N-myristoyl glycine) is attached at G2. C3 is lipidated: S-palmitoyl cysteine. The 323-residue stretch at 33-355 folds into the G-alpha domain; sequence REVKLLLLGA…KNNLKDCGLF (323 aa). Positions 36–49 are G1 motif; sequence KLLLLGAGESGKST. Residues 41-48, 176-182, 201-205, 270-273, and A327 each bind GTP; these read GAGESGKS, LRTRVKT, DVGGQ, and NKKD. Residues S48 and T182 each contribute to the Mg(2+) site. The tract at residues 174 to 182 is G2 motif; that stretch reads DVLRTRVKT. The tract at residues 197–206 is G3 motif; the sequence is FKLFDVGGQR. The interval 266–273 is G4 motif; sequence ILFLNKKD. The segment at 325–330 is G5 motif; that stretch reads TCATDT.

It belongs to the G-alpha family. G(i/o/t/z) subfamily. G proteins are composed of 3 units; alpha, beta and gamma. The alpha chain contains the guanine nucleotide binding site.

Guanine nucleotide-binding proteins (G proteins) are involved as modulators or transducers in various transmembrane signaling systems. This chain is Guanine nucleotide-binding protein G(i) subunit alpha, found in Homarus americanus (American lobster).